We begin with the raw amino-acid sequence, 210 residues long: Shikimate kinase (210 aa).

Position 34 to 39 (34 to 39 (GVGKSV)) interacts with ATP. Residue S38 coordinates Mg(2+). Substrate is bound by residues D56, R80, and G102. R140 lines the ATP pocket. R159 is a binding site for substrate.

Belongs to the shikimate kinase family. Monomer. Mg(2+) serves as cofactor.

It is found in the cytoplasm. It carries out the reaction shikimate + ATP = 3-phosphoshikimate + ADP + H(+). The protein operates within metabolic intermediate biosynthesis; chorismate biosynthesis; chorismate from D-erythrose 4-phosphate and phosphoenolpyruvate: step 5/7. Catalyzes the specific phosphorylation of the 3-hydroxyl group of shikimic acid using ATP as a cosubstrate. This Bartonella henselae (strain ATCC 49882 / DSM 28221 / CCUG 30454 / Houston 1) (Rochalimaea henselae) protein is Shikimate kinase.